Reading from the N-terminus, the 311-residue chain is Methionyl-tRNA formyltransferase (311 aa).

112-115 (SLLP) provides a ligand contact to (6S)-5,6,7,8-tetrahydrofolate.

It belongs to the Fmt family.

The enzyme catalyses L-methionyl-tRNA(fMet) + (6R)-10-formyltetrahydrofolate = N-formyl-L-methionyl-tRNA(fMet) + (6S)-5,6,7,8-tetrahydrofolate + H(+). Its function is as follows. Attaches a formyl group to the free amino group of methionyl-tRNA(fMet). The formyl group appears to play a dual role in the initiator identity of N-formylmethionyl-tRNA by promoting its recognition by IF2 and preventing the misappropriation of this tRNA by the elongation apparatus. This Geobacter metallireducens (strain ATCC 53774 / DSM 7210 / GS-15) protein is Methionyl-tRNA formyltransferase.